The primary structure comprises 165 residues: METLQGLLLWLLLSMGGAQASREPLRPLCRPINATLAAEKEACPVCVTVNTTICAGYCPTMMRVLQAVLPPVPQVVCNYREVRFESIRLPGCPPGVDPMVSVPVALSCRCALCRRSTSDCGGPKDHPLTCDDPNLQASSSSKDPPPSPPSPSRLLEPAGTPFLPQ.

A signal peptide spans 1–20 (METLQGLLLWLLLSMGGAQA). 6 disulfide bridges follow: C29–C77, C43–C92, C46–C130, C54–C108, C58–C110, and C113–C120. N33 and N50 each carry an N-linked (GlcNAc...) asparagine glycan. Residues 131–165 (DDPNLQASSSSKDPPPSPPSPSRLLEPAGTPFLPQ) form a disordered region. O-linked (GalNAc...) serine glycosylation is found at S141, S147, and S152.

Belongs to the glycoprotein hormones subunit beta family. Heterodimer of a common alpha chain and a unique beta chain which confers biological specificity to thyrotropin, lutropin, follitropin and gonadotropin. As to expression, placenta.

It localises to the secreted. Functionally, stimulates the ovaries to synthesize the steroids that are essential for the maintenance of pregnancy. This is Choriogonadotropin subunit beta (CGB) from Papio anubis (Olive baboon).